The following is a 1046-amino-acid chain: Protein jim lovell (1046 aa).

Residues 54 to 109 (TSDHAPMHSTPPTTPPTPPPLPLNMSQSASAVTEAATPENSLPATPPSEGALAVPS) are disordered. Residues 65–75 (PTTPPTPPPLP) are compositionally biased toward pro residues. In terms of domain architecture, BTB spans 140-205 (VDVTLVCAET…MYRGEISVPQ (66 aa)). Disordered stretches follow at residues 290–342 (LRRK…DAES), 355–501 (AERD…KLQD), 632–655 (PPFG…PGQA), 686–719 (EFGP…GMSS), 758–791 (RDMP…RSWT), 851–947 (EMLQ…APNA), and 998–1046 (DCKS…TGHD). The segment covering 294–303 (REQESDRDLE) has biased composition (basic and acidic residues). Residues 315 to 324 (PRRKQARPRR) show a composition bias toward basic residues. Positions 365–380 (QDNSQGEAEKISSSPA) are enriched in polar residues. Residues 383–412 (LVERAKEQKSMKEEGSDQPRSLNENHHQLE) are compositionally biased toward basic and acidic residues. Acidic residues predominate over residues 413-432 (LDDEDDDDQDHEEEEEQDIE). Positions 433–443 (ELIHTTNELRR) are enriched in basic and acidic residues. Residues 445 to 454 (AAAAAANAAA) are compositionally biased toward low complexity. A compositionally biased stretch (gly residues) spans 636-651 (GHNGGHPGNSGPGNGC). Pro residues predominate over residues 703–714 (DGPPHPPSPLPF). Residues 768 to 777 (LKKKMPRPKG) show a composition bias toward basic residues. An HTH psq-type domain is found at 781 to 833 (APRGGPPRSWTNTELTEALQHVWNKKMTTSQASRIFGIPYNSLLMYVRGKYGK). Over residues 866-881 (KNEKSKERKEKEKDKN) the composition is skewed to basic and acidic residues. Composition is skewed to low complexity over residues 882 to 897 (SMSS…SQGG) and 912 to 925 (LGPM…LGLP).

Initially expressed at blastoderm stage, transient accumulation at dorso-lateral positions of the embryo and differences along the longitudinal axis. At later stages of embryogenesis, expression is found exclusively in neural anlagen. Expressed in 4 posterior-most ventral unpaired median interneurons (VUM) neurons, VUM interneurons and one progeny of the median neuroblast (MNB).

It is found in the nucleus. Functionally, has a regulatory role during midline cell development. The sequence is that of Protein jim lovell (lov) from Drosophila melanogaster (Fruit fly).